We begin with the raw amino-acid sequence, 210 residues long: Thymidylate kinase (210 aa).

10 to 17 provides a ligand contact to ATP; that stretch reads GLEGAGKT.

Belongs to the thymidylate kinase family.

The enzyme catalyses dTMP + ATP = dTDP + ADP. In terms of biological role, phosphorylation of dTMP to form dTDP in both de novo and salvage pathways of dTTP synthesis. This is Thymidylate kinase from Actinobacillus succinogenes (strain ATCC 55618 / DSM 22257 / CCUG 43843 / 130Z).